The sequence spans 302 residues: Ethylmalonyl-CoA decarboxylase (302 aa).

Belongs to the enoyl-CoA hydratase/isomerase family.

The protein resides in the cytoplasm. It is found in the cytosol. It carries out the reaction (2S)-ethylmalonyl-CoA + H(+) = butanoyl-CoA + CO2. It catalyses the reaction (S)-methylmalonyl-CoA + H(+) = propanoyl-CoA + CO2. The enzyme catalyses (2R)-ethylmalonyl-CoA + H(+) = butanoyl-CoA + CO2. In terms of biological role, decarboxylates ethylmalonyl-CoA, a potentially toxic metabolite, to form butyryl-CoA, suggesting it might be involved in metabolite proofreading. Acts preferentially on (S)-ethylmalonyl-CoA but also has some activity on the (R)-isomer. Also has methylmalonyl-CoA decarboxylase activity at lower level. The protein is Ethylmalonyl-CoA decarboxylase (echdc1) of Danio rerio (Zebrafish).